The sequence spans 679 residues: Methionine--tRNA ligase (679 aa).

The 'HIGH' region signature appears at 15–25; sequence PYANGPIHLGH. Zn(2+) contacts are provided by Cys146, Cys149, Cys159, and Cys162. The short motif at 332-336 is the 'KMSKS' region element; the sequence is KMSKS. Position 335 (Lys335) interacts with ATP. In terms of domain architecture, tRNA-binding spans 578-679; the sequence is DFAKIDLRIA…EGAQPGMKVK (102 aa).

It belongs to the class-I aminoacyl-tRNA synthetase family. MetG type 1 subfamily. As to quaternary structure, homodimer. Requires Zn(2+) as cofactor.

The protein localises to the cytoplasm. It carries out the reaction tRNA(Met) + L-methionine + ATP = L-methionyl-tRNA(Met) + AMP + diphosphate. Functionally, is required not only for elongation of protein synthesis but also for the initiation of all mRNA translation through initiator tRNA(fMet) aminoacylation. The polypeptide is Methionine--tRNA ligase (Shewanella halifaxensis (strain HAW-EB4)).